We begin with the raw amino-acid sequence, 439 residues long: Glycosyl hydrolase DigH (439 aa).

The N-terminal stretch at 1–27 is a signal peptide; it reads MDICSRNKKLTIRRPAILVALALLLCS. Residue cysteine 28 is the site of N-palmitoyl cysteine attachment. Cysteine 28 carries S-diacylglycerol cysteine lipidation. Residues 34–54 are disordered; that stretch reads ESMVTPPAGSKPPATTQQSSQ.

The protein belongs to the glycosyl hydrolase-like 10 (GHL10) family.

It is found in the cell outer membrane. Functionally, divisome-localized glycosyl hydrolase that cleaves peptide-free (denuded) peptidoglycans. The chain is Glycosyl hydrolase DigH from Escherichia coli O157:H7.